We begin with the raw amino-acid sequence, 160 residues long: Sulfur-rich protein (160 aa).

2 consecutive transmembrane segments (helical) span residues I63 to L83 and F92 to M112.

The protein resides in the membrane. The protein is Sulfur-rich protein (srp) of Chlamydophila psittaci (strain ATCC VR-125 / 6BC) (Chlamydia psittaci).